We begin with the raw amino-acid sequence, 267 residues long: tRNA-cytidine(32) 2-sulfurtransferase 1 (267 aa).

The PP-loop motif motif lies at 42–47; that stretch reads SGGKDS. Positions 117, 120, and 208 each coordinate [4Fe-4S] cluster.

This sequence belongs to the TtcA family. As to quaternary structure, homodimer. Mg(2+) serves as cofactor. Requires [4Fe-4S] cluster as cofactor.

The protein resides in the cytoplasm. The catalysed reaction is cytidine(32) in tRNA + S-sulfanyl-L-cysteinyl-[cysteine desulfurase] + AH2 + ATP = 2-thiocytidine(32) in tRNA + L-cysteinyl-[cysteine desulfurase] + A + AMP + diphosphate + H(+). It participates in tRNA modification. Its function is as follows. Catalyzes the ATP-dependent 2-thiolation of cytidine in position 32 of tRNA, to form 2-thiocytidine (s(2)C32). The sulfur atoms are provided by the cysteine/cysteine desulfurase (IscS) system. This chain is tRNA-cytidine(32) 2-sulfurtransferase 1, found in Francisella tularensis subsp. novicida (strain U112).